Reading from the N-terminus, the 282-residue chain is Putative hydrolase Bcen_5340 (282 aa).

Positions 124, 126, and 155 each coordinate Mg(2+).

It belongs to the FAH family. Mg(2+) serves as cofactor.

The sequence is that of Putative hydrolase Bcen_5340 from Burkholderia orbicola (strain AU 1054).